A 279-amino-acid chain; its full sequence is DegV domain-containing protein SACOL1460 (279 aa).

The DegV domain maps to 4–278; that stretch reads QIIVTDSTSD…QGAIGLVVLK (275 aa). Residues Thr61 and Ser93 each coordinate hexadecanoate.

Functionally, may bind long-chain fatty acids, such as palmitate, and may play a role in lipid transport or fatty acid metabolism. This is DegV domain-containing protein SACOL1460 from Staphylococcus aureus (strain COL).